Reading from the N-terminus, the 106-residue chain is UPF0145 protein Pput_2816 (106 aa).

This sequence belongs to the UPF0145 family.

The protein is UPF0145 protein Pput_2816 of Pseudomonas putida (strain ATCC 700007 / DSM 6899 / JCM 31910 / BCRC 17059 / LMG 24140 / F1).